We begin with the raw amino-acid sequence, 430 residues long: Aspartate aminotransferase, mitochondrial (430 aa).

A mitochondrion-targeting transit peptide spans 1–28 (MALAMMIRNAASKRGMTPISGHFGGLRS). L-aspartate is bound by residues Gly-65, Trp-160, and Asn-213. Lys-277 is subject to N6-(pyridoxal phosphate)lysine. Arg-405 contributes to the L-aspartate binding site.

It belongs to the class-I pyridoxal-phosphate-dependent aminotransferase family. In terms of assembly, homodimer. Pyridoxal 5'-phosphate serves as cofactor.

It localises to the mitochondrion matrix. It carries out the reaction L-aspartate + 2-oxoglutarate = oxaloacetate + L-glutamate. In terms of biological role, amino acid aminotransferase important for the metabolism of amino acids and Krebs-cycle related organic acids. No activity with D-Asp or D-Ala as amino donors. In plants, it is involved in nitrogen metabolism and in aspects of carbon and energy metabolism. The protein is Aspartate aminotransferase, mitochondrial (ASP1) of Arabidopsis thaliana (Mouse-ear cress).